Consider the following 379-residue polypeptide: Reducing end xylose-releasing exo-oligoxylanase (379 aa).

The active-site Proton donor is the glutamate 66. Aspartate 259 functions as the Proton acceptor in the catalytic mechanism.

This sequence belongs to the glycosyl hydrolase 8 (cellulase D) family.

The enzyme catalyses Hydrolysis of (1-&gt;4)-beta-D-xylose residues from the reducing end of oligosaccharides.. Its function is as follows. Hydrolyzes xylooligosaccharides with a degree of polymerization of greater than or equal to 3, releasing xylose from the reducing end. Has low activity on birchwood xylan, oat spelt xylan and arabinoxylan. The sequence is that of Reducing end xylose-releasing exo-oligoxylanase from Bifidobacterium adolescentis (strain ATCC 15703 / DSM 20083 / NCTC 11814 / E194a).